Reading from the N-terminus, the 529-residue chain is Peptide chain release factor 3 (529 aa).

A tr-type G domain is found at 11–280 (SKRRTFAIIS…GLTDWAPAPL (270 aa)). Residues 20-27 (SHPDAGKT), 88-92 (DTPGH), and 142-145 (NKLD) each bind GTP.

This sequence belongs to the TRAFAC class translation factor GTPase superfamily. Classic translation factor GTPase family. PrfC subfamily.

It localises to the cytoplasm. Increases the formation of ribosomal termination complexes and stimulates activities of RF-1 and RF-2. It binds guanine nucleotides and has strong preference for UGA stop codons. It may interact directly with the ribosome. The stimulation of RF-1 and RF-2 is significantly reduced by GTP and GDP, but not by GMP. This chain is Peptide chain release factor 3, found in Vibrio vulnificus (strain YJ016).